We begin with the raw amino-acid sequence, 325 residues long: Beta-ketoacyl-[acyl-carrier-protein] synthase III (325 aa).

Active-site residues include Cys-114 and His-252. The interval 253–257 is ACP-binding; it reads QANFR. Asn-282 is a catalytic residue.

The protein belongs to the thiolase-like superfamily. FabH family. Homodimer.

It localises to the cytoplasm. The enzyme catalyses malonyl-[ACP] + acetyl-CoA + H(+) = 3-oxobutanoyl-[ACP] + CO2 + CoA. Its pathway is lipid metabolism; fatty acid biosynthesis. In terms of biological role, catalyzes the condensation reaction of fatty acid synthesis by the addition to an acyl acceptor of two carbons from malonyl-ACP. Catalyzes the first condensation reaction which initiates fatty acid synthesis and may therefore play a role in governing the total rate of fatty acid production. Possesses both acetoacetyl-ACP synthase and acetyl transacylase activities. Its substrate specificity determines the biosynthesis of branched-chain and/or straight-chain of fatty acids. The sequence is that of Beta-ketoacyl-[acyl-carrier-protein] synthase III from Novosphingobium aromaticivorans (strain ATCC 700278 / DSM 12444 / CCUG 56034 / CIP 105152 / NBRC 16084 / F199).